A 686-amino-acid polypeptide reads, in one-letter code: Homoaconitase, mitochondrial (686 aa).

Residues 1 to 17 constitute a mitochondrion transit peptide; the sequence is MRVVRCVRRFSASRAVS. The [4Fe-4S] cluster site is built by Cys-337, Cys-401, and Cys-404.

Belongs to the aconitase/IPM isomerase family. [4Fe-4S] cluster is required as a cofactor.

Its subcellular location is the mitochondrion. It catalyses the reaction (2R,3S)-homoisocitrate = cis-homoaconitate + H2O. It functions in the pathway amino-acid biosynthesis; L-lysine biosynthesis via AAA pathway; L-alpha-aminoadipate from 2-oxoglutarate: step 3/5. Its function is as follows. Catalyzes the reversible hydration of cis-homoaconitate to (2R,3S)-homoisocitrate, a step in the alpha-aminoadipate pathway for lysine biosynthesis. The protein is Homoaconitase, mitochondrial (LYS4) of Eremothecium gossypii (strain ATCC 10895 / CBS 109.51 / FGSC 9923 / NRRL Y-1056) (Yeast).